The sequence spans 424 residues: Enolase (424 aa).

Gln-165 contributes to the (2R)-2-phosphoglycerate binding site. Glu-207 acts as the Proton donor in catalysis. Residues Asp-244, Glu-283, and Asp-310 each coordinate Mg(2+). (2R)-2-phosphoglycerate is bound by residues Lys-335, Arg-364, Ser-365, and Lys-386. Residue Lys-335 is the Proton acceptor of the active site.

It belongs to the enolase family. Mg(2+) serves as cofactor.

The protein resides in the cytoplasm. It is found in the secreted. Its subcellular location is the cell surface. The catalysed reaction is (2R)-2-phosphoglycerate = phosphoenolpyruvate + H2O. Its pathway is carbohydrate degradation; glycolysis; pyruvate from D-glyceraldehyde 3-phosphate: step 4/5. Functionally, catalyzes the reversible conversion of 2-phosphoglycerate (2-PG) into phosphoenolpyruvate (PEP). It is essential for the degradation of carbohydrates via glycolysis. The chain is Enolase from Chlamydia trachomatis serovar D (strain ATCC VR-885 / DSM 19411 / UW-3/Cx).